A 188-amino-acid polypeptide reads, in one-letter code: Ribosome-recycling factor (188 aa).

The protein belongs to the RRF family.

The protein resides in the cytoplasm. In terms of biological role, responsible for the release of ribosomes from messenger RNA at the termination of protein biosynthesis. May increase the efficiency of translation by recycling ribosomes from one round of translation to another. In Acidiphilium cryptum (strain JF-5), this protein is Ribosome-recycling factor.